A 90-amino-acid polypeptide reads, in one-letter code: Long neurotoxin 7 (90 aa).

An N-terminal signal peptide occupies residues 1–21 (MKTLLLTLVLVTIMCLDLGYT). 5 disulfide bridges follow: Cys-24–Cys-41, Cys-35–Cys-62, Cys-47–Cys-51, Cys-66–Cys-77, and Cys-78–Cys-83.

It belongs to the three-finger toxin family. Long-chain subfamily. Type II alpha-neurotoxin sub-subfamily. Expressed by the venom gland.

It is found in the secreted. In terms of biological role, binds with high affinity to muscular (alpha-1/CHRNA1) and neuronal (alpha-7/CHRNA7) nicotinic acetylcholine receptor (nAChR) and inhibits acetylcholine from binding to the receptor, thereby impairing neuromuscular and neuronal transmission. The chain is Long neurotoxin 7 from Naja sputatrix (Malayan spitting cobra).